The sequence spans 320 residues: Aspartate carbamoyltransferase catalytic subunit (320 aa).

Carbamoyl phosphate contacts are provided by Arg-70 and Thr-71. Residue Lys-98 coordinates L-aspartate. Carbamoyl phosphate-binding residues include Arg-120, His-149, and Gln-152. L-aspartate contacts are provided by Arg-182 and Arg-237. Carbamoyl phosphate contacts are provided by Gly-278 and Pro-279.

The protein belongs to the aspartate/ornithine carbamoyltransferase superfamily. ATCase family. Heterododecamer (2C3:3R2) of six catalytic PyrB chains organized as two trimers (C3), and six regulatory PyrI chains organized as three dimers (R2).

The catalysed reaction is carbamoyl phosphate + L-aspartate = N-carbamoyl-L-aspartate + phosphate + H(+). It participates in pyrimidine metabolism; UMP biosynthesis via de novo pathway; (S)-dihydroorotate from bicarbonate: step 2/3. Its function is as follows. Catalyzes the condensation of carbamoyl phosphate and aspartate to form carbamoyl aspartate and inorganic phosphate, the committed step in the de novo pyrimidine nucleotide biosynthesis pathway. The polypeptide is Aspartate carbamoyltransferase catalytic subunit (Ruthia magnifica subsp. Calyptogena magnifica).